Consider the following 388-residue polypeptide: Beta-lactamase (388 aa).

The signal sequence occupies residues 1–24 (MMKKSIINTLIFTSIATFPLYTLA). Catalysis depends on serine 89, which acts as the Acyl-ester intermediate. Tyrosine 175 acts as the Proton acceptor in catalysis. Position 342–344 (342–344 (KTG)) interacts with substrate.

The protein belongs to the class-C beta-lactamase family.

It localises to the periplasm. It carries out the reaction a beta-lactam + H2O = a substituted beta-amino acid. Functionally, this protein is a serine beta-lactamase with a substrate specificity for cephalosporins. This is Beta-lactamase (ampC) from Yersinia enterocolitica.